Reading from the N-terminus, the 493-residue chain is Dipeptidase 3 (493 aa).

The signal sequence occupies residues 1-35; the sequence is MQPAGLEGPRALGLRPLGHRLSLLGVLLLVPSLWV. Residues 41–60 show a composition bias toward low complexity; it reads TPSPSSAPTTPEASNATTAP. Residues 41–74 form a disordered region; it reads TPSPSSAPTTPEASNATTAPGIPNDTATSGVTSD. 2 disulfides stabilise this stretch: C143–C222 and C294–C326. N331 is a glycosylation site (N-linked (GlcNAc...) asparagine). S462 carries GPI-anchor amidated serine lipidation. A propeptide spans 463-493 (removed in mature form); the sequence is KAPPHPLPGLMATLTSLALILWLCCSGHRAV.

Belongs to the metallo-dependent hydrolases superfamily. Peptidase M19 family. As to quaternary structure, homodimer; disulfide-linked. Interacts with TEX101; co-localized on the cell surface of spermatocytes, spermatids, and testicular spermatozoa, co-localized only in cytoplasmic droplets of caput and corpus epididymal sperm. Expressed in testis but not ovary.

It localises to the membrane. Its function is as follows. Lacks dipeptidase activity and is unable to hydrolyze cystinyl-bis-glycine. The absence of activity may be due to the inability of serine (instead of aspartate found in DPEP1/2) at position 356 to function as the acid/base catalyst and activate the nucleophilic water/hydroxide. Does not hydrolyze leukotriene D4 (LTD4) into leukotriene E4 (LTE4). Does not hydrolyze the beta-lactam antibiotic imipenem. The sequence is that of Dipeptidase 3 (Dpep3) from Mus musculus (Mouse).